The following is a 444-amino-acid chain: Phosphoglucosamine mutase (444 aa).

Serine 102 acts as the Phosphoserine intermediate in catalysis. Serine 102, aspartate 241, aspartate 243, and aspartate 245 together coordinate Mg(2+). At serine 102 the chain carries Phosphoserine.

The protein belongs to the phosphohexose mutase family. The cofactor is Mg(2+). In terms of processing, activated by phosphorylation.

The enzyme catalyses alpha-D-glucosamine 1-phosphate = D-glucosamine 6-phosphate. In terms of biological role, catalyzes the conversion of glucosamine-6-phosphate to glucosamine-1-phosphate. This is Phosphoglucosamine mutase from Erwinia tasmaniensis (strain DSM 17950 / CFBP 7177 / CIP 109463 / NCPPB 4357 / Et1/99).